A 180-amino-acid polypeptide reads, in one-letter code: GTP cyclohydrolase 1 (180 aa).

Positions 71, 74, and 142 each coordinate Zn(2+).

This sequence belongs to the GTP cyclohydrolase I family. Homomer.

The catalysed reaction is GTP + H2O = 7,8-dihydroneopterin 3'-triphosphate + formate + H(+). The protein operates within cofactor biosynthesis; 7,8-dihydroneopterin triphosphate biosynthesis; 7,8-dihydroneopterin triphosphate from GTP: step 1/1. This chain is GTP cyclohydrolase 1, found in Helicobacter pylori (strain G27).